Here is a 139-residue protein sequence, read N- to C-terminus: Gastrula zinc finger protein XlCGF29.1 (139 aa).

5 consecutive C2H2-type zinc fingers follow at residues 6–28, 34–56, 62–84, 90–112, and 117–139; these read FTCT…LLIH, FDST…LSTH, FVCT…LHSH, FPCS…LRHH, and FPCT…QMIH.

The protein belongs to the krueppel C2H2-type zinc-finger protein family.

It localises to the nucleus. Its function is as follows. May be involved in transcriptional regulation. The polypeptide is Gastrula zinc finger protein XlCGF29.1 (Xenopus laevis (African clawed frog)).